The chain runs to 290 residues: UPF0750 membrane protein YpjC (290 aa).

6 consecutive transmembrane segments (helical) span residues 9–29 (NIFFILIGAAIFSFGLVHFNM), 47–67 (ALFHISPSISNLVLNIPIFFI), 75–95 (TMFVYTLVGTVALSLFLSIFQ), 106–126 (DLALAALFAGVFIGAGLGIIF), 146–166 (FGIPMGRTMFAFDACVIILSL), and 179–199 (LVAVFVAARLIDFIQEGGYAA).

It belongs to the UPF0750 family.

It localises to the cell membrane. In Bacillus subtilis (strain 168), this protein is UPF0750 membrane protein YpjC (ypjC).